Reading from the N-terminus, the 268-residue chain is LOB domain-containing protein 22 (268 aa).

A disordered region spans residues 1–31 (MPSGKPSSVFPLHPKPTPLKPSSSTSSSNNN). A compositionally biased stretch (low complexity) spans 22–31 (SSSTSSSNNN). The region spanning 35-136 (QACAACKYQR…NELEIVLQQL (102 aa)) is the LOB domain.

This sequence belongs to the LOB domain-containing protein family.

This Arabidopsis thaliana (Mouse-ear cress) protein is LOB domain-containing protein 22 (LBD22).